The sequence spans 214 residues: 3-isopropylmalate dehydratase small subunit (214 aa).

It belongs to the LeuD family. LeuD type 1 subfamily. As to quaternary structure, heterodimer of LeuC and LeuD.

The enzyme catalyses (2R,3S)-3-isopropylmalate = (2S)-2-isopropylmalate. It functions in the pathway amino-acid biosynthesis; L-leucine biosynthesis; L-leucine from 3-methyl-2-oxobutanoate: step 2/4. In terms of biological role, catalyzes the isomerization between 2-isopropylmalate and 3-isopropylmalate, via the formation of 2-isopropylmaleate. The polypeptide is 3-isopropylmalate dehydratase small subunit (Pseudomonas putida (strain ATCC 47054 / DSM 6125 / CFBP 8728 / NCIMB 11950 / KT2440)).